Consider the following 273-residue polypeptide: uncharacterized protein (273 aa).

The chain crosses the membrane as a helical span at residues L7–T27.

It belongs to the staphylococcal tandem lipoprotein family.

It localises to the cell membrane. This is an uncharacterized protein from Staphylococcus aureus (strain MSSA476).